Consider the following 395-residue polypeptide: Phosphoprotein (395 aa).

Positions 178–217 (NGVLHGSEIRSKSSSGVIPGVPQSRPQLASSPAHADPAPA) are disordered. The span at 206 to 217 (ASSPAHADPAPA) shows a compositional bias: low complexity. Residues 220-283 (ENVKEIIELL…ITTIKIMDPS (64 aa)) form a multimerization region.

Belongs to the rubulavirus/avulavirus P protein family. In terms of assembly, homotetramer. Interacts (via multimerization domain) with polymerase L; this interaction forms the polymerase L-P complex. Interacts (via N-terminus) with N0 (via Ncore); this interaction allows P to chaperon N0 to avoid N polymerization before encapsidation. Interacts (via C-terminus) with N-RNA template; this interaction positions the polymerase on the template for both transcription and replication. Interacts with host ARHGAP26; this interaction promotes host RHOA activation. Interacts with host KPNA1 and KPNA6.

Its subcellular location is the host cytoplasm. Essential cofactor of the RNA polymerase L that plays a central role in the transcription and replication by forming the polymerase complex with RNA polymerase L and recruiting L to the genomic N-RNA template for RNA synthesis. Also plays a central role in the encapsidation of nascent RNA chains by forming the encapsidation complex with the nucleocapsid protein N (N-P complex). Acts as a chaperone for newly synthesized free N protein, so-called N0, allowing encapsidation of nascent RNA chains during replication. The nucleoprotein protein N prevents excessive phosphorylation of P, which leads to down-regulation of viral transcription/ replication. Participates, together with N, in the formation of viral factories (viroplasms), which are large inclusions in the host cytoplasm where replication takes place. Also plays a role in viral growth by promoting host RHOA activation and thus actin formation via ARHGAP26 inhibition. The sequence is that of Phosphoprotein (P/V) from Homo sapiens (Human).